The following is a 313-amino-acid chain: tRNA-cytidine(32) 2-sulfurtransferase (313 aa).

The short motif at 47–52 is the PP-loop motif element; sequence SGGKDS. Residues cysteine 122, cysteine 125, and cysteine 213 each coordinate [4Fe-4S] cluster. The disordered stretch occupies residues 288-313; it reads PVGWQPEDDEDTEKRPPVRLDVLEIK. Over residues 299 to 313 the composition is skewed to basic and acidic residues; the sequence is TEKRPPVRLDVLEIK.

The protein belongs to the TtcA family. In terms of assembly, homodimer. Mg(2+) is required as a cofactor. The cofactor is [4Fe-4S] cluster.

It localises to the cytoplasm. The catalysed reaction is cytidine(32) in tRNA + S-sulfanyl-L-cysteinyl-[cysteine desulfurase] + AH2 + ATP = 2-thiocytidine(32) in tRNA + L-cysteinyl-[cysteine desulfurase] + A + AMP + diphosphate + H(+). It functions in the pathway tRNA modification. Its function is as follows. Catalyzes the ATP-dependent 2-thiolation of cytidine in position 32 of tRNA, to form 2-thiocytidine (s(2)C32). The sulfur atoms are provided by the cysteine/cysteine desulfurase (IscS) system. The polypeptide is tRNA-cytidine(32) 2-sulfurtransferase (Yersinia pseudotuberculosis serotype O:1b (strain IP 31758)).